We begin with the raw amino-acid sequence, 131 residues long: Protein NrdI (131 aa).

Belongs to the NrdI family.

Functionally, probably involved in ribonucleotide reductase function. The polypeptide is Protein NrdI (Bacillus licheniformis (strain ATCC 14580 / DSM 13 / JCM 2505 / CCUG 7422 / NBRC 12200 / NCIMB 9375 / NCTC 10341 / NRRL NRS-1264 / Gibson 46)).